A 448-amino-acid chain; its full sequence is RING finger protein 44 (448 aa).

An RING-type; atypical zinc finger spans residues 396-437; the sequence is CVVCFSDFESRQLLRVLPCNHEFHAKCVDKWLKTNRTCPICR.

The chain is RING finger protein 44 (rnf44) from Danio rerio (Zebrafish).